The primary structure comprises 124 residues: MAAAMTFCRLLNRCGEAARSLPLGARCFGVRVSPTGEKVTHTGQVYDDKDYRRIRFVGRQKEVNENFAIDLIAEQPVSEVETRVIACDGGGGALGHPKVYINLDKETKTGTCGYCGLQFRQHHH.

A mitochondrion-targeting transit peptide spans 1 to 28 (MAAAMTFCRLLNRCGEAARSLPLGARCF). The residue at position 98 (Lys98) is an N6-acetyllysine.

It belongs to the complex I NDUFS6 subunit family. Mammalian complex I is composed of 45 different subunits. This is a component of the iron-sulfur (IP) fragment of the enzyme.

The protein localises to the mitochondrion inner membrane. Accessory subunit of the mitochondrial membrane respiratory chain NADH dehydrogenase (Complex I), that is believed not to be involved in catalysis. Complex I functions in the transfer of electrons from NADH to the respiratory chain. The immediate electron acceptor for the enzyme is believed to be ubiquinone. The sequence is that of NADH dehydrogenase [ubiquinone] iron-sulfur protein 6, mitochondrial (NDUFS6) from Homo sapiens (Human).